We begin with the raw amino-acid sequence, 338 residues long: Protein FosB (338 aa).

Disordered regions lie at residues 1–54 (MFQA…PGSF) and 80–179 (AQSQ…RREL). Over residues 13–31 (SRCSSSPSAESQYLSSVDS) the composition is skewed to polar residues. S27 bears the Phosphoserine mark. Residues 123-137 (PSTSTSTSGPVSARP) show a composition bias toward low complexity. One can recognise a bZIP domain in the interval 155–218 (EEKRRVRRER…ERLEFVLVAH (64 aa)). The tract at residues 157–182 (KRRVRRERNKLAAAKCRNRRRELTDR) is basic motif. A leucine-zipper region spans residues 183-211 (LQAETDQLEEEKAELESEIAELQKEKERL). Disordered stretches follow at residues 222–276 (CKIP…PPNL) and 315–338 (AGSQRTSGSEQPSDPLNSPSLLAL). Residues 256–265 (LPPPPPPPLP) show a composition bias toward pro residues. Residues 266-276 (FQSSRDAPPNL) are compositionally biased toward polar residues.

Belongs to the bZIP family. Fos subfamily. In terms of assembly, heterodimer; binds to DNA as heterodimer. Component of an AP-1 transcription factor complex; composed of FOS-JUN heterodimers. As part of the AP-1 transcription factor complex, forms heterodimers with JUN, JUNB or JUND, thereby binding to the AP-1 consensus sequence and stimulating transcription. Phosphorylated; phosphorylation is induced by chronic electroconvulsive seizure (ECS) treatment. In terms of tissue distribution, expressed in brain. Expressed in pyramidal cells in CA1 and CA3, in the dentate gyrus and the nucleus accumbens (at protein level).

Its subcellular location is the nucleus. Functionally, heterodimerizes with proteins of the JUN family to form an AP-1 transcription factor complex, thereby enhancing their DNA binding activity to an AP-1 consensus sequence 5'-TGA[GC]TCA-3' and enhancing their transcriptional activity. Exhibits transactivation activity in vitro. As part of the AP-1 complex, facilitates enhancer selection together with cell-type-specific transcription factors by collaboratively binding to nucleosomal enhancers and recruiting the SWI/SNF (BAF) chromatin remodeling complex to establish accessible chromatin. Together with JUN, plays a role in activation-induced cell death of T cells by binding to the AP-1 promoter site of FASLG/CD95L, and inducing its transcription in response to activation of the TCR/CD3 signaling pathway. Involved in the display of nurturing behavior towards newborns. May play a role in neurogenesis in the hippocampus and in learning and memory-related tasks by regulating the expression of various genes involved in neurogenesis, depression and epilepsy. Implicated in behavioral responses related to morphine reward and spatial memory. The chain is Protein FosB from Rattus norvegicus (Rat).